The chain runs to 134 residues: Gastrin-releasing peptide (134 aa).

The N-terminal stretch at Met-1 to Ala-23 is a signal peptide. Met-50 carries the post-translational modification Methionine amide. Positions Ser-54–Asn-134 are excised as a propeptide. The tract at residues Gly-95–Asn-134 is disordered. Basic and acidic residues predominate over residues Gly-123 to Asn-134.

It belongs to the bombesin/neuromedin-B/ranatensin family. Detected in adrenal medulla (at protein level).

It localises to the cytoplasmic vesicle. The protein localises to the secretory vesicle lumen. The protein resides in the secreted. It is found in the cell projection. Its subcellular location is the neuron projection. In terms of biological role, stimulates the release of gastrin and other gastrointestinal hormones. Contributes to the perception of prurient stimuli and to the transmission of itch signals in the spinal cord that promote scratching behavior. Contributes primarily to nonhistaminergic itch sensation. In one study, shown to act in the amygdala as part of an inhibitory network which inhibits memory specifically related to learned fear. In another study, shown to act on vasoactive intestinal peptide (VIP)-expressing cells in the auditory cortex, most likely via extrasynaptic diffusion from local and long-range sources, to mediate disinhibition of glutamatergic cells via VIP cell-specific GRPR signaling which leads to enhanced auditory fear memories. Contributes to the regulation of food intake. Inhibits voltage-gated sodium channels but enhances voltage-gated potassium channels in hippocampal neurons. Induces sighing by acting directly on the pre-Botzinger complex, a cluster of several thousand neurons in the ventrolateral medulla responsible for inspiration during respiratory activity. Induces an itch response through activation of receptors present on mast cells, triggering mast cell degranulation. The polypeptide is Gastrin-releasing peptide (GRP) (Bos taurus (Bovine)).